A 939-amino-acid chain; its full sequence is Isoleucine--tRNA ligase (939 aa).

The 'HIGH' region motif lies at 57 to 67 (PYANGHIHIGH). Glutamate 563 contributes to the L-isoleucyl-5'-AMP binding site. The 'KMSKS' region motif lies at 604–608 (KMSKS). ATP is bound at residue lysine 607. Positions 903, 906, 921, and 924 each coordinate Zn(2+).

The protein belongs to the class-I aminoacyl-tRNA synthetase family. IleS type 1 subfamily. Monomer. The cofactor is Zn(2+).

It localises to the cytoplasm. It catalyses the reaction tRNA(Ile) + L-isoleucine + ATP = L-isoleucyl-tRNA(Ile) + AMP + diphosphate. Catalyzes the attachment of isoleucine to tRNA(Ile). As IleRS can inadvertently accommodate and process structurally similar amino acids such as valine, to avoid such errors it has two additional distinct tRNA(Ile)-dependent editing activities. One activity is designated as 'pretransfer' editing and involves the hydrolysis of activated Val-AMP. The other activity is designated 'posttransfer' editing and involves deacylation of mischarged Val-tRNA(Ile). The sequence is that of Isoleucine--tRNA ligase from Sulfurihydrogenibium sp. (strain YO3AOP1).